A 239-amino-acid chain; its full sequence is Ribonuclease HII (239 aa).

Positions 30 to 221 (GPVAGVDEVG…VRRVATRSNG (192 aa)) constitute an RNase H type-2 domain. A divalent metal cation contacts are provided by D36, E37, and D130. Positions 217–239 (TRSNGAATAEREADPPQERDGTG) are disordered. Over residues 225–239 (AEREADPPQERDGTG) the composition is skewed to basic and acidic residues.

It belongs to the RNase HII family. Mn(2+) serves as cofactor. The cofactor is Mg(2+).

It localises to the cytoplasm. It catalyses the reaction Endonucleolytic cleavage to 5'-phosphomonoester.. Endonuclease that specifically degrades the RNA of RNA-DNA hybrids. The chain is Ribonuclease HII from Mycobacterium ulcerans (strain Agy99).